The chain runs to 359 residues: Phospho-N-acetylmuramoyl-pentapeptide-transferase (359 aa).

A run of 10 helical transmembrane segments spans residues 3–23 (QILI…PVLI), 55–75 (VAIL…GLAL), 84–104 (GLLV…DDLI), 120–140 (TVGI…FGNA), 156–176 (IATV…LVSA), 187–207 (LDGL…LITF), 231–251 (LALV…WNAA), 255–275 (IFMG…LSVT), 280–300 (ILAV…VVQI), and 334–354 (FWLL…GEWL).

The protein belongs to the glycosyltransferase 4 family. MraY subfamily. It depends on Mg(2+) as a cofactor.

It is found in the cell membrane. It carries out the reaction UDP-N-acetyl-alpha-D-muramoyl-L-alanyl-gamma-D-glutamyl-meso-2,6-diaminopimeloyl-D-alanyl-D-alanine + di-trans,octa-cis-undecaprenyl phosphate = di-trans,octa-cis-undecaprenyl diphospho-N-acetyl-alpha-D-muramoyl-L-alanyl-D-glutamyl-meso-2,6-diaminopimeloyl-D-alanyl-D-alanine + UMP. Its pathway is cell wall biogenesis; peptidoglycan biosynthesis. Its function is as follows. Catalyzes the initial step of the lipid cycle reactions in the biosynthesis of the cell wall peptidoglycan: transfers peptidoglycan precursor phospho-MurNAc-pentapeptide from UDP-MurNAc-pentapeptide onto the lipid carrier undecaprenyl phosphate, yielding undecaprenyl-pyrophosphoryl-MurNAc-pentapeptide, known as lipid I. The sequence is that of Phospho-N-acetylmuramoyl-pentapeptide-transferase from Mycobacterium sp. (strain JLS).